A 505-amino-acid polypeptide reads, in one-letter code: Lysine--tRNA ligase (505 aa).

Residues E415 and E422 each contribute to the Mg(2+) site.

The protein belongs to the class-II aminoacyl-tRNA synthetase family. As to quaternary structure, homodimer. The cofactor is Mg(2+).

The protein localises to the cytoplasm. It catalyses the reaction tRNA(Lys) + L-lysine + ATP = L-lysyl-tRNA(Lys) + AMP + diphosphate. The polypeptide is Lysine--tRNA ligase (Enterobacter sp. (strain 638)).